We begin with the raw amino-acid sequence, 245 residues long: RAD51-like protein 1 (245 aa).

In terms of assembly, interacts with brc-2 and rad-51.

It is found in the nucleus. Functionally, has a role in the homologous recombination repair (HRR) of genomic DNA during meiosis. Required for rad-51 recruitment onto ssDNA gaps generated at stalled replication fork barriers. This is RAD51-like protein 1 (rfs-1) from Caenorhabditis elegans.